Here is a 144-residue protein sequence, read N- to C-terminus: D-aminoacyl-tRNA deacylase (144 aa).

A Gly-cisPro motif, important for rejection of L-amino acids motif is present at residues 136-137; the sequence is GP.

Belongs to the DTD family. Homodimer.

The protein localises to the cytoplasm. It carries out the reaction glycyl-tRNA(Ala) + H2O = tRNA(Ala) + glycine + H(+). The enzyme catalyses a D-aminoacyl-tRNA + H2O = a tRNA + a D-alpha-amino acid + H(+). An aminoacyl-tRNA editing enzyme that deacylates mischarged D-aminoacyl-tRNAs. Also deacylates mischarged glycyl-tRNA(Ala), protecting cells against glycine mischarging by AlaRS. Acts via tRNA-based rather than protein-based catalysis; rejects L-amino acids rather than detecting D-amino acids in the active site. By recycling D-aminoacyl-tRNA to D-amino acids and free tRNA molecules, this enzyme counteracts the toxicity associated with the formation of D-aminoacyl-tRNA entities in vivo and helps enforce protein L-homochirality. The protein is D-aminoacyl-tRNA deacylase of Haemophilus influenzae (strain 86-028NP).